Consider the following 74-residue polypeptide: Large ribosomal subunit protein bL31 (74 aa).

4 residues coordinate Zn(2+): Cys-16, Cys-18, Cys-38, and Cys-41.

The protein belongs to the bacterial ribosomal protein bL31 family. Type A subfamily. As to quaternary structure, part of the 50S ribosomal subunit. Requires Zn(2+) as cofactor.

Functionally, binds the 23S rRNA. This Mycobacteroides abscessus (strain ATCC 19977 / DSM 44196 / CCUG 20993 / CIP 104536 / JCM 13569 / NCTC 13031 / TMC 1543 / L948) (Mycobacterium abscessus) protein is Large ribosomal subunit protein bL31.